Here is a 622-residue protein sequence, read N- to C-terminus: Polypeptide N-acetylgalactosaminyltransferase 6 (622 aa).

Over 1 to 8 (MRLLRRRH) the chain is Cytoplasmic. Residues 9–28 (MSLRLAMLGSVFMLFLFIRQ) traverse the membrane as a helical; Signal-anchor for type II membrane protein segment. Over 29–622 (KDVSNQEQAM…RDPYQLWLFV (594 aa)) the chain is Lumenal. The N-linked (GlcNAc...) asparagine glycan is linked to asparagine 86. The interval 176–285 (LPTTSVIIVF…HGWLEPLLAR (110 aa)) is catalytic subdomain A. Residues aspartate 269, histidine 271, and histidine 407 each contribute to the Mn(2+) site. The tract at residues 348–410 (PIKSPTFAGG…PCSVVGHVFR (63 aa)) is catalytic subdomain B. N-linked (GlcNAc...) asparagine glycosylation is present at asparagine 476. Positions 506–622 (TNQCLDVGEN…RDPYQLWLFV (117 aa)) constitute a Ricin B-type lectin domain. Cysteine 509 and cysteine 527 form a disulfide bridge. UDP-N-acetyl-alpha-D-galactosamine is bound by residues aspartate 511, glutamate 514, histidine 528, and asparagine 533. Cystine bridges form between cysteine 553/cysteine 566 and cysteine 597/cysteine 610.

The protein belongs to the glycosyltransferase 2 family. GalNAc-T subfamily. Mn(2+) is required as a cofactor.

It is found in the golgi apparatus membrane. It carries out the reaction L-seryl-[protein] + UDP-N-acetyl-alpha-D-galactosamine = a 3-O-[N-acetyl-alpha-D-galactosaminyl]-L-seryl-[protein] + UDP + H(+). The catalysed reaction is L-threonyl-[protein] + UDP-N-acetyl-alpha-D-galactosamine = a 3-O-[N-acetyl-alpha-D-galactosaminyl]-L-threonyl-[protein] + UDP + H(+). Its pathway is protein modification; protein glycosylation. Its function is as follows. Catalyzes the initial reaction in O-linked oligosaccharide biosynthesis, the transfer of an N-acetyl-D-galactosamine residue to a serine or threonine residue on the protein receptor. May participate in synthesis of oncofetal fibronectin. Has activity toward Muc1a, Muc2, EA2 and fibronectin peptides. The sequence is that of Polypeptide N-acetylgalactosaminyltransferase 6 (Galnt6) from Mus musculus (Mouse).